Here is a 369-residue protein sequence, read N- to C-terminus: Anhydro-N-acetylmuramic acid kinase (369 aa).

12–19 (GTSLDGVD) provides a ligand contact to ATP.

This sequence belongs to the anhydro-N-acetylmuramic acid kinase family.

It carries out the reaction 1,6-anhydro-N-acetyl-beta-muramate + ATP + H2O = N-acetyl-D-muramate 6-phosphate + ADP + H(+). The protein operates within amino-sugar metabolism; 1,6-anhydro-N-acetylmuramate degradation. It participates in cell wall biogenesis; peptidoglycan recycling. Its function is as follows. Catalyzes the specific phosphorylation of 1,6-anhydro-N-acetylmuramic acid (anhMurNAc) with the simultaneous cleavage of the 1,6-anhydro ring, generating MurNAc-6-P. Is required for the utilization of anhMurNAc either imported from the medium or derived from its own cell wall murein, and thus plays a role in cell wall recycling. The sequence is that of Anhydro-N-acetylmuramic acid kinase from Escherichia coli O1:K1 / APEC.